We begin with the raw amino-acid sequence, 286 residues long: MTITFNAIQDLQQALHPLRTDKKIALVPTMGNLHDGHISLVKLAQEHADVVVVSIFVNPTQFGVGEDLDSYPRTLEADTQKLTEAGVDYIFAPSVEEMYPVMPPPTQVLAGAISQYLCGKSRPTHFDGVGIVVTKLFNIVQPNVAVFGKKDYQQLAIIKQLVRDLSYNIEIIGAPLVRAVDGLALSSRNQYLTETERQIAPMLNQHLSKLAQKLKNTPIANNQQLQALIEDTIAQINNAGFRVDYLEVSNQDLSKITDFYGQKQWVIAVAAWLGKARLLDNQEVNG.

Residue 30–37 (MGNLHDGH) coordinates ATP. His-37 (proton donor) is an active-site residue. Gln-61 is a (R)-pantoate binding site. Gln-61 provides a ligand contact to beta-alanine. Position 148–151 (148–151 (GKKD)) interacts with ATP. Gln-154 serves as a coordination point for (R)-pantoate. ATP is bound by residues Val-177 and 185 to 188 (LSSR).

The protein belongs to the pantothenate synthetase family. Homodimer.

It is found in the cytoplasm. It carries out the reaction (R)-pantoate + beta-alanine + ATP = (R)-pantothenate + AMP + diphosphate + H(+). The protein operates within cofactor biosynthesis; (R)-pantothenate biosynthesis; (R)-pantothenate from (R)-pantoate and beta-alanine: step 1/1. Catalyzes the condensation of pantoate with beta-alanine in an ATP-dependent reaction via a pantoyl-adenylate intermediate. This chain is Pantothenate synthetase, found in Psychrobacter sp. (strain PRwf-1).